The following is a 485-amino-acid chain: NADH-quinone oxidoreductase subunit N (485 aa).

Transmembrane regions (helical) follow at residues 8–28, 35–55, 75–95, 105–125, 127–147, 159–179, 203–223, 235–255, 271–291, 303–323, 326–346, 371–393, 406–426, and 449–469; these read LIAL…MLCI, FINS…LWFV, FYTG…YAWL, FYLL…ANHL, ALFL…GYAF, YTLL…LVYA, LLAG…LVPF, PVPV…AVVM, LVLA…ALSQ, IAHL…TLAL, VGVY…VVSL, LLSS…LGFI, HLGW…FYYL, and ALTA…LLGL.

It belongs to the complex I subunit 2 family. NDH-1 is composed of 13 different subunits. Subunits NuoA, H, J, K, L, M, N constitute the membrane sector of the complex.

It localises to the cell inner membrane. The catalysed reaction is a quinone + NADH + 5 H(+)(in) = a quinol + NAD(+) + 4 H(+)(out). Functionally, NDH-1 shuttles electrons from NADH, via FMN and iron-sulfur (Fe-S) centers, to quinones in the respiratory chain. The immediate electron acceptor for the enzyme in this species is believed to be ubiquinone. Couples the redox reaction to proton translocation (for every two electrons transferred, four hydrogen ions are translocated across the cytoplasmic membrane), and thus conserves the redox energy in a proton gradient. The sequence is that of NADH-quinone oxidoreductase subunit N from Sodalis glossinidius (strain morsitans).